The sequence spans 88 residues: Small ribosomal subunit protein bS16 (88 aa).

The protein belongs to the bacterial ribosomal protein bS16 family.

This is Small ribosomal subunit protein bS16 from Mycoplasmopsis pulmonis (strain UAB CTIP) (Mycoplasma pulmonis).